The primary structure comprises 474 residues: A-type ATP synthase subunit B (474 aa).

Belongs to the ATPase alpha/beta chains family. Has multiple subunits with at least A(3), B(3), C, D, E, F, H, I and proteolipid K(x).

The protein localises to the cell membrane. Component of the A-type ATP synthase that produces ATP from ADP in the presence of a proton gradient across the membrane. The B chain is a regulatory subunit. The protein is A-type ATP synthase subunit B of Halorubrum lacusprofundi (strain ATCC 49239 / DSM 5036 / JCM 8891 / ACAM 34).